Consider the following 772-residue polypeptide: MKISDGNWLIQPGLNLIHPLQVFEVEQQDNEMVVYAAPRDVRERTWQLDTPLFTLRFFSPQEGIVGVRIEHFQGALNNGPHYPLNILQDVKVTIENTERYAEFKSGNLSARVSKGEFWSLDFLRNGERITGSQVKNNGYVQDTNNQRNYMFERLDLGVGETVYGLGERFTALVRNGQTVETWNRDGGTSTEQAYKNIPFYMTNRGYGVLVNHPQCVSFEVGSEKVSKVQFSVESEYLEYFVIDGPTPKAVLDRYTRFTGRPALPPAWSFGLWLTTSFTTNYDEATVNSFIDGMAERNLPLHVFHFDCFWMKAFQWCDFEWDPLTFPDPEGMIRRLKAKGLKICVWINPYIGQKSPVFKELQEKGYLLKRPDGSLWQWDKWQPGLAIYDFTNPDACKWYADKLKGLVAMGVDCFKTDFGERIPTDVQWFDGSDPQKMHNHYAYIYNELVWNVLKDTVGEEEAVLFARSASVGAQKFPVHWGGDCYANYESMAESLRGGLSIGLSGFGFWSHDIGGFENTAPAHVYKRWCAFGLLSSHSRLHGSKSYRVPWAYDDESCDVVRFFTQLKCRMMPYLYREAARANARGTPMMRAMMMEFPDDPACDYLDRQYMLGDNVMVAPVFTEAGDVQFYLPEGRWTHLWHNDELDGSRWHKQQHGFLSLPVYVRDNTLLALGNNDQRPDYVWHEGTAFHLFNLQDGHEAVCEVPAADGSVIFTLKAARTGNTITVTGAGEAKNWTLCLRNVVKVNGLQDGSQAESEQGLVVKPQGNALTITL.

Aspartate 416 functions as the Nucleophile in the catalytic mechanism. The active site involves glutamate 419. Aspartate 482 functions as the Proton donor in the catalytic mechanism.

It belongs to the glycosyl hydrolase 31 family. In terms of assembly, homohexamer.

The enzyme catalyses Hydrolysis of terminal, non-reducing alpha-D-xylose residues with release of alpha-D-xylose.. Can catalyze the transfer of alpha-xylosyl residue from alpha-xyloside to xylose, glucose, mannose, fructose, maltose, isomaltose, nigerose, kojibiose, sucrose and trehalose. This is Alpha-xylosidase (yicI) from Escherichia coli (strain K12).